A 218-amino-acid polypeptide reads, in one-letter code: Small ribosomal subunit protein uS3c (218 aa).

Residues 43–118 (IKNYVQKNPR…RLNIAIARIS (76 aa)) enclose the KH type-2 domain.

This sequence belongs to the universal ribosomal protein uS3 family. As to quaternary structure, part of the 30S ribosomal subunit.

The protein localises to the plastid. Its subcellular location is the chloroplast. The sequence is that of Small ribosomal subunit protein uS3c (rps3) from Acorus calamus (Sweet flag).